A 116-amino-acid chain; its full sequence is Large ribosomal subunit protein uL18 (116 aa).

It belongs to the universal ribosomal protein uL18 family. In terms of assembly, part of the 50S ribosomal subunit; part of the 5S rRNA/L5/L18/L25 subcomplex. Contacts the 5S and 23S rRNAs.

This is one of the proteins that bind and probably mediate the attachment of the 5S RNA into the large ribosomal subunit, where it forms part of the central protuberance. The sequence is that of Large ribosomal subunit protein uL18 from Shewanella piezotolerans (strain WP3 / JCM 13877).